We begin with the raw amino-acid sequence, 424 residues long: Endoglucanase 1 (424 aa).

Residues 1–18 (MAKFSALCSLALLGLATA) form the signal peptide. 9 disulfides stabilise this stretch: Cys35–Cys41, Cys68–Cys90, Cys80–Cys86, Cys156–Cys384, Cys188–Cys211, Cys192–Cys210, Cys231–Cys250, Cys239–Cys244, and Cys255–Cys331. Asn76 carries N-linked (GlcNAc...) asparagine glycosylation. Glu213 (nucleophile) is an active-site residue. Residue Glu218 is the Proton donor of the active site. 2 N-linked (GlcNAc...) asparagine glycosylation sites follow: Asn271 and Asn385.

The protein belongs to the glycosyl hydrolase 7 (cellulase C) family. As to quaternary structure, monomer.

The protein resides in the secreted. It carries out the reaction Endohydrolysis of (1-&gt;4)-beta-D-glucosidic linkages in cellulose, lichenin and cereal beta-D-glucans.. Its function is as follows. Endoglucanase that is involved in the biological conversion of cellulose to glucose. Hydrolyzes internal beta-1,4-glucosidic bonds. The protein is Endoglucanase 1 of Pyricularia oryzae (strain 70-15 / ATCC MYA-4617 / FGSC 8958) (Rice blast fungus).